The chain runs to 343 residues: MLVVQMPFSFPMAHFILFVFTVSTIFHVQQRLAKIQAMWELPVQIPVLASTSKALGHSQLRGMWTINAIGRLGNQMGEYATLYALAKMNGRPAFIPAQMHNTLAPIFRITLPVLNSAMASRIPWHNYHLNDWMEEEYRHIPGEYVRLTGYPCSWTFYHHLRHEILQEFTLHDHVREEAQKFLRGLQVNGSRPGTFVGVHVRRGDYVHVMPKVWKGVVADRRYLQQALDWFRARYSSPIFVVTSNGMAWCRENIDTSHGDVVFAGDGIEGSPAKDFALLTQCNHTIMTIGTFGIWAAYLTGGDTIYLANYTLPDSPFLKIFKPEAAFLPEWTGIAADLSPLLKH.

The Cytoplasmic portion of the chain corresponds to 1–14 (MLVVQMPFSFPMAH). A helical; Signal-anchor for type II membrane protein membrane pass occupies residues 15-28 (FILFVFTVSTIFHV). Residues 29 to 343 (QQRLAKIQAM…AADLSPLLKH (315 aa)) lie on the Lumenal side of the membrane. 3 N-linked (GlcNAc...) asparagine glycosylation sites follow: Asn-188, Asn-282, and Asn-308.

The protein belongs to the glycosyltransferase 11 family.

The protein resides in the golgi apparatus. It localises to the golgi stack membrane. It catalyses the reaction a beta-D-galactosyl-(1-&gt;3)-N-acetyl-beta-D-glucosaminyl derivative + GDP-beta-L-fucose = an alpha-L-Fuc-(1-&gt;2)-beta-D-Gal-(1-&gt;3)-beta-D-GlcNAc derivative + GDP + H(+). It carries out the reaction a beta-D-galactosyl-(1-&gt;4)-N-acetyl-beta-D-glucosaminyl derivative + GDP-beta-L-fucose = an alpha-L-Fuc-(1-&gt;2)-beta-D-Gal-(1-&gt;4)-beta-D-GlcNAc derivative + GDP + H(+). The enzyme catalyses a neolactoside nLc4Cer + GDP-beta-L-fucose = a neolactoside IV(2)-alpha-Fuc-nLc4Cer + GDP + H(+). The catalysed reaction is a neolactoside nLc4Cer(d18:1(4E)) + GDP-beta-L-fucose = a neolactoside IV(2)-alpha-Fuc-nLc4Cer(d18:1(4E)) + GDP + H(+). It catalyses the reaction a ganglioside GM1 + GDP-beta-L-fucose = a ganglioside Fuc-GM1 + GDP + H(+). It carries out the reaction a ganglioside GA1 + GDP-beta-L-fucose = a ganglioside Fuc-GA1 + GDP + H(+). The enzyme catalyses Lc4Cer + GDP-beta-L-fucose = alpha-L-fucosyl-(1-&gt;2)-beta-D-galactosyl-(1-&gt;3)-N-acetyl-beta-D-glucosaminyl-(1-&gt;3)-beta-D-galactosyl-(1-&gt;4)-beta-D-glucosyl-(1&lt;-&gt;1')-ceramide + GDP + H(+). The catalysed reaction is a beta-D-Gal-(1-&gt;3)-beta-D-GlcNAc-(1-&gt;3)-beta-D-Gal-(1-&gt;4)-beta-D-Glc-(1&lt;-&gt;1')-Cer(d18:1(4E)) + GDP-beta-L-fucose = alpha-L-fucosyl-(1-&gt;2)- beta-D-galactosyl-(1-&gt;3)-N-acetyl-beta-D-glucosaminyl-(1-&gt;3)-beta-D-galactosyl-(1-&gt;4)-beta-D-glucosyl-(1&lt;-&gt;1')-N-acylsphing-4-enine + GDP + H(+). It catalyses the reaction a ganglioside GD1b + GDP-beta-L-fucose = a ganglioside Fuc-GD1b + GDP + H(+). It carries out the reaction a ganglioside GM1 (d18:1(4E)) + GDP-beta-L-fucose = a ganglioside Fuc-GM1 (d18:1(4E)) + GDP + H(+). The enzyme catalyses a globoside GalGb4Cer (d18:1(4E)) + GDP-beta-L-fucose = a globoside Globo-H (d18:1(4E)) + GDP + H(+). The catalysed reaction is a lactoside III(4)-a-Fuc-Lc4Cer + GDP-beta-L-fucose = a lactoside IV(2),III(4)-a-[Fuc]2-Lc4Cer + GDP + H(+). It catalyses the reaction beta-D-galactosyl-(1-&gt;3)-N-acetyl-D-galactosamine + GDP-beta-L-fucose = alpha-L-fucosyl-(1-&gt;2)-beta-D-galactosyl-(1-&gt;3)-N-acetyl-D-galactosamine + GDP + H(+). Its pathway is protein modification; protein glycosylation. Functionally, catalyzes the transfer of L-fucose, from a guanosine diphosphate-beta-L-fucose, to the terminal galactose on both O- and N-linked glycans chains of cell surface glycoproteins and glycolipids and the resulting epitope regulates several processes such as cell-cell interaction including host-microbe interaction, cell surface expression and cell proliferation. Preferentially fucosylates gangliosides GA1 and GM1 in the antrum, cecum and colon and in the female reproductive organs. Fucosylated host glycoproteins or glycolipids mediate interaction with intestinal microbiota influencing its composition. Creates a soluble precursor oligosaccharide FuC-alpha ((1,2)Galbeta-) called the H antigen which is an essential substrate for the final step in the soluble ABO blood group antigen synthesis pathway. The protein is Galactoside alpha-(1,2)-fucosyltransferase 2 of Hylobates lar (Lar gibbon).